A 359-amino-acid chain; its full sequence is Small ribosomal subunit biogenesis GTPase RsgA (359 aa).

Residues 101–259 (KRKGSQAIAS…LMDNPGIREV (159 aa)) form the CP-type G domain. GTP contacts are provided by residues 149-152 (NKKD) and 201-209 (GSSGAGKST). Zn(2+) is bound by residues C284, C289, H291, and C297. The disordered stretch occupies residues 331–359 (DPEEARKKKQKDKQMSKALQKRLKDKGRK). The span at 349 to 359 (LQKRLKDKGRK) shows a compositional bias: basic residues.

Belongs to the TRAFAC class YlqF/YawG GTPase family. RsgA subfamily. Monomer. Associates with 30S ribosomal subunit, binds 16S rRNA. The cofactor is Zn(2+).

Its subcellular location is the cytoplasm. In terms of biological role, one of several proteins that assist in the late maturation steps of the functional core of the 30S ribosomal subunit. Helps release RbfA from mature subunits. May play a role in the assembly of ribosomal proteins into the subunit. Circularly permuted GTPase that catalyzes slow GTP hydrolysis, GTPase activity is stimulated by the 30S ribosomal subunit. This chain is Small ribosomal subunit biogenesis GTPase RsgA, found in Leptospira interrogans serogroup Icterohaemorrhagiae serovar Lai (strain 56601).